Reading from the N-terminus, the 205-residue chain is Superoxide dismutase [Fe] (205 aa).

Residues histidine 33, histidine 81, aspartate 167, and histidine 171 each contribute to the Fe cation site.

Belongs to the iron/manganese superoxide dismutase family. As to quaternary structure, homotetramer. Requires Fe cation as cofactor.

It catalyses the reaction 2 superoxide + 2 H(+) = H2O2 + O2. Destroys superoxide anion radicals which are normally produced within the cells and which are toxic to biological systems. This chain is Superoxide dismutase [Fe] (sod), found in Methanothermobacter thermautotrophicus (strain ATCC 29096 / DSM 1053 / JCM 10044 / NBRC 100330 / Delta H) (Methanobacterium thermoautotrophicum).